A 154-amino-acid polypeptide reads, in one-letter code: Putative pre-16S rRNA nuclease (154 aa).

It belongs to the YqgF nuclease family.

The protein localises to the cytoplasm. Could be a nuclease involved in processing of the 5'-end of pre-16S rRNA. The sequence is that of Putative pre-16S rRNA nuclease from Rickettsia akari (strain Hartford).